A 207-amino-acid chain; its full sequence is LexA repressor (207 aa).

The H-T-H motif DNA-binding region spans 28–48 (VREIGEAVGLASSSTVHGHLA). Catalysis depends on for autocatalytic cleavage activity residues S129 and K167.

This sequence belongs to the peptidase S24 family. Homodimer.

It catalyses the reaction Hydrolysis of Ala-|-Gly bond in repressor LexA.. In terms of biological role, represses a number of genes involved in the response to DNA damage (SOS response), including recA and lexA. In the presence of single-stranded DNA, RecA interacts with LexA causing an autocatalytic cleavage which disrupts the DNA-binding part of LexA, leading to derepression of the SOS regulon and eventually DNA repair. The protein is LexA repressor of Bacillus licheniformis (strain ATCC 14580 / DSM 13 / JCM 2505 / CCUG 7422 / NBRC 12200 / NCIMB 9375 / NCTC 10341 / NRRL NRS-1264 / Gibson 46).